We begin with the raw amino-acid sequence, 165 residues long: MRLTSKGRYAVTAMLDVALHSHEGPVPLADISERQGISLSYLEQLFSRLRKNGLVASVRGPGGGYLLGKAADAIAVGAVITAVDESVDATKCQGKEGCQGGERCLTHVLWRDLSERISDFLNNITLAELVNNQEILVVADRQNSNEIRRAPHGRMHETINVNLRA.

One can recognise an HTH rrf2-type domain in the interval R2 to N131. The segment at residues L28–K51 is a DNA-binding region (H-T-H motif). [2Fe-2S] cluster contacts are provided by C92, C98, and C104.

[2Fe-2S] cluster is required as a cofactor.

Functionally, regulates the transcription of several operons and genes involved in the biogenesis of Fe-S clusters and Fe-S-containing proteins. This Erwinia tasmaniensis (strain DSM 17950 / CFBP 7177 / CIP 109463 / NCPPB 4357 / Et1/99) protein is HTH-type transcriptional regulator IscR.